The following is a 261-amino-acid chain: Cytochrome c oxidase subunit 3 (261 aa).

At 1–15 (MAHQAHSYHMVDPSP) the chain is on the mitochondrial matrix side. Residues 16-34 (WPIFGATAALLTTSGLIMW) traverse the membrane as a helical segment. Residues 35-40 (FHYNSL) lie on the Mitochondrial intermembrane side of the membrane. The helical transmembrane segment at 41-66 (YLLTLGLLSMFLVMIQWWRDIVREST) threads the bilayer. The Mitochondrial matrix portion of the chain corresponds to 67-72 (FQGHHT). A helical transmembrane segment spans residues 73–105 (PTVQKGLRYGMILFITSEAFFFLGFFWAFFHSS). Residues 106–128 (LAPTPELGAQWPPTGINPLNPLE) are Mitochondrial intermembrane-facing. Residues 129 to 152 (VPLLNTAILLASGVTVTWAHHSIT) form a helical membrane-spanning segment. Topologically, residues 153-155 (ESN) are mitochondrial matrix. The chain crosses the membrane as a helical span at residues 156 to 183 (RKQAIHALSLTIILGFYFTALQAMEYHE). The Mitochondrial intermembrane segment spans residues 184 to 190 (ASFSIAD). The helical transmembrane segment at 191–223 (GVYGSTFFVATGFHGLHVIIGSSFLTVCLLRLI) threads the bilayer. At 224 to 232 (KFHFTTNHH) the chain is on the mitochondrial matrix side. A helical membrane pass occupies residues 233–256 (FGFEAAAWYWHFVDVIWLFLYMSI). Residues 257–261 (YWWGS) are Mitochondrial intermembrane-facing.

The protein belongs to the cytochrome c oxidase subunit 3 family. Component of the cytochrome c oxidase (complex IV, CIV), a multisubunit enzyme composed of 14 subunits. The complex is composed of a catalytic core of 3 subunits MT-CO1, MT-CO2 and MT-CO3, encoded in the mitochondrial DNA, and 11 supernumerary subunits COX4I, COX5A, COX5B, COX6A, COX6B, COX6C, COX7A, COX7B, COX7C, COX8 and NDUFA4, which are encoded in the nuclear genome. The complex exists as a monomer or a dimer and forms supercomplexes (SCs) in the inner mitochondrial membrane with NADH-ubiquinone oxidoreductase (complex I, CI) and ubiquinol-cytochrome c oxidoreductase (cytochrome b-c1 complex, complex III, CIII), resulting in different assemblies (supercomplex SCI(1)III(2)IV(1) and megacomplex MCI(2)III(2)IV(2)).

It is found in the mitochondrion inner membrane. The enzyme catalyses 4 Fe(II)-[cytochrome c] + O2 + 8 H(+)(in) = 4 Fe(III)-[cytochrome c] + 2 H2O + 4 H(+)(out). Functionally, component of the cytochrome c oxidase, the last enzyme in the mitochondrial electron transport chain which drives oxidative phosphorylation. The respiratory chain contains 3 multisubunit complexes succinate dehydrogenase (complex II, CII), ubiquinol-cytochrome c oxidoreductase (cytochrome b-c1 complex, complex III, CIII) and cytochrome c oxidase (complex IV, CIV), that cooperate to transfer electrons derived from NADH and succinate to molecular oxygen, creating an electrochemical gradient over the inner membrane that drives transmembrane transport and the ATP synthase. Cytochrome c oxidase is the component of the respiratory chain that catalyzes the reduction of oxygen to water. Electrons originating from reduced cytochrome c in the intermembrane space (IMS) are transferred via the dinuclear copper A center (CU(A)) of subunit 2 and heme A of subunit 1 to the active site in subunit 1, a binuclear center (BNC) formed by heme A3 and copper B (CU(B)). The BNC reduces molecular oxygen to 2 water molecules using 4 electrons from cytochrome c in the IMS and 4 protons from the mitochondrial matrix. This is Cytochrome c oxidase subunit 3 (MT-CO3) from Struthio camelus (Common ostrich).